The primary structure comprises 78 residues: Small ribosomal subunit protein uS19m (78 aa).

Belongs to the universal ribosomal protein uS19 family.

The protein resides in the mitochondrion. In Acanthamoeba castellanii (Amoeba), this protein is Small ribosomal subunit protein uS19m (RPS19).